The following is a 131-amino-acid chain: Maturin (131 aa).

A Phosphotyrosine modification is found at Tyr-34. A compositionally biased stretch (acidic residues) spans 107 to 120; sequence FEEYSADVEEEEPE. The interval 107 to 131 is disordered; that stretch reads FEEYSADVEEEEPEADHPQMGVSQQ.

Belongs to the MTURN family. In terms of processing, phosphorylation at Tyr-34 is essential for its ability to promote megakaryocyte differentiation.

Its subcellular location is the cytoplasm. Its function is as follows. Promotes megakaryocyte differentiation by enhancing ERK and JNK signaling as well as up-regulating RUNX1 and FLI1 expression. Represses NF-kappa-B transcriptional activity by inhibiting phosphorylation of RELA at 'Ser- 536'. May be involved in early neuronal development. This chain is Maturin (MTURN), found in Bos taurus (Bovine).